The following is a 267-amino-acid chain: Ribosomal RNA small subunit methyltransferase A (267 aa).

Residues N16, L18, G43, E64, D89, and N110 each contribute to the S-adenosyl-L-methionine site.

This sequence belongs to the class I-like SAM-binding methyltransferase superfamily. rRNA adenine N(6)-methyltransferase family. RsmA subfamily.

The protein localises to the cytoplasm. It carries out the reaction adenosine(1518)/adenosine(1519) in 16S rRNA + 4 S-adenosyl-L-methionine = N(6)-dimethyladenosine(1518)/N(6)-dimethyladenosine(1519) in 16S rRNA + 4 S-adenosyl-L-homocysteine + 4 H(+). In terms of biological role, specifically dimethylates two adjacent adenosines (A1518 and A1519) in the loop of a conserved hairpin near the 3'-end of 16S rRNA in the 30S particle. May play a critical role in biogenesis of 30S subunits. This chain is Ribosomal RNA small subunit methyltransferase A, found in Pseudomonas putida (strain ATCC 47054 / DSM 6125 / CFBP 8728 / NCIMB 11950 / KT2440).